We begin with the raw amino-acid sequence, 496 residues long: Lysine--tRNA ligase (496 aa).

Glu-408 and Glu-415 together coordinate Mg(2+).

It belongs to the class-II aminoacyl-tRNA synthetase family. Homodimer. The cofactor is Mg(2+).

It is found in the cytoplasm. The enzyme catalyses tRNA(Lys) + L-lysine + ATP = L-lysyl-tRNA(Lys) + AMP + diphosphate. The sequence is that of Lysine--tRNA ligase from Legionella pneumophila (strain Lens).